The sequence spans 283 residues: Thymidylate synthase (283 aa).

DUMP is bound at residue R22. The active-site Nucleophile is C160. Residues 180–183 (RSAD), N191, and 221–223 (HIY) contribute to the dUMP site. (6R)-5,10-methylene-5,6,7,8-tetrahydrofolate is bound at residue D183. S282 contacts (6R)-5,10-methylene-5,6,7,8-tetrahydrofolate.

This sequence belongs to the thymidylate synthase family. Bacterial-type ThyA subfamily. As to quaternary structure, homodimer.

The protein resides in the cytoplasm. The catalysed reaction is dUMP + (6R)-5,10-methylene-5,6,7,8-tetrahydrofolate = 7,8-dihydrofolate + dTMP. It participates in pyrimidine metabolism; dTTP biosynthesis. In terms of biological role, catalyzes the reductive methylation of 2'-deoxyuridine-5'-monophosphate (dUMP) to 2'-deoxythymidine-5'-monophosphate (dTMP) while utilizing 5,10-methylenetetrahydrofolate (mTHF) as the methyl donor and reductant in the reaction, yielding dihydrofolate (DHF) as a by-product. This enzymatic reaction provides an intracellular de novo source of dTMP, an essential precursor for DNA biosynthesis. The sequence is that of Thymidylate synthase from Glaesserella parasuis serovar 5 (strain SH0165) (Haemophilus parasuis).